A 710-amino-acid polypeptide reads, in one-letter code: Probable inactive DNA (cytosine-5)-methyltransferase DRM3 (710 aa).

The disordered stretch occupies residues 1–21; that stretch reads MADMRRRNGSGGSSNHERNEQ. One can recognise a UBA 1 domain in the interval 52–92; sequence SGSNVKSLLIEMGFCPTLVQKAIDENGQDDFELLLEILTKS. A compositionally biased stretch (acidic residues) spans 167-184; it reads ESEDSLDGAEINEEDEDV. The segment at 167-192 is disordered; that stretch reads ESEDSLDGAEINEEDEDVTPVTARGP. Residues 198–242 form the UBA 2 domain; sequence QLFETMDKTLRLLEMGFSNDEISMAIEKIGTKGQISVLAESIVTG. The interval 282 to 360 is disordered; that stretch reads AQKEDGGGGS…MGDSSSFMET (79 aa). Residues 339–350 show a composition bias toward basic and acidic residues; that stretch reads YDDRGKRLRPED. An SAM-dependent MTase DRM-type domain is found at 379-710; the sequence is QPRLSQSLGP…RVTKRVRDMM (332 aa).

It belongs to the class I-like SAM-binding methyltransferase superfamily. DRM-methyltransferase family. Interacts with Pol V.

The protein resides in the nucleus. Functionally, catalytically inactive DNA methyltransferase that acts as regulatory factor for DRM2-mediated DNA methylation. Required for maintenance of non-CpG DNA methylation. Required for normal establishment and maintenance of RNA-directed DNA methylation (RdDM) and accumulation of specific repeat-associated small interfering RNAs (siRNAs). Required for nucleolus organizer region (NOR) nuclear organization during interphase. Acts downstream of the production of siRNAs. May promote RNA polymerase V (Pol V) transcriptional elongation or assist in the stabilization of Pol V transcripts. This chain is Probable inactive DNA (cytosine-5)-methyltransferase DRM3, found in Arabidopsis thaliana (Mouse-ear cress).